A 341-amino-acid polypeptide reads, in one-letter code: THO complex subunit 6 homolog (341 aa).

7 WD repeats span residues Arg-22 to Ala-61, Ala-74 to Glu-112, Leu-124 to Arg-165, Gly-166 to Thr-205, Ser-215 to Val-254, Pro-256 to Val-293, and Gly-295 to Leu-339. At Ser-180 the chain carries Phosphoserine.

Belongs to the WD repeat THOC6 family. As to quaternary structure, component of the THO subcomplex, which is composed of THOC1, THOC2, THOC3, THOC5, THOC6 and THOC7. The THO subcomplex interacts with DDX39B to form the THO-DDX39B complex which multimerizes into a 28-subunit tetrameric assembly. Component of the transcription/export (TREX) complex at least composed of ALYREF/THOC4, DDX39B, SARNP/CIP29, CHTOP and the THO subcomplex; in the complex interacts with THOC5; together with THOC5 and THOC7, plays a key structural role in the oligomerization of the THO-DDX39B complex. TREX seems to have a dynamic structure involving ATP-dependent remodeling.

The protein resides in the nucleus. It localises to the nucleus speckle. In terms of biological role, component of the THO subcomplex of the TREX complex which is thought to couple mRNA transcription, processing and nuclear export, and which specifically associates with spliced mRNA and not with unspliced pre-mRNA. Plays a key structural role in the oligomerization of the THO-DDX39B complex. TREX is recruited to spliced mRNAs by a transcription-independent mechanism, binds to mRNA upstream of the exon-junction complex (EJC) and is recruited in a splicing- and cap-dependent manner to a region near the 5' end of the mRNA where it functions in mRNA export to the cytoplasm via the TAP/NXF1 pathway. Plays a role in apoptosis negative control involved in brain development. This is THO complex subunit 6 homolog (Thoc6) from Mus musculus (Mouse).